The following is a 336-amino-acid chain: 25S rRNA (uridine(2634)-N(3))-methyltransferase (336 aa).

The disordered stretch occupies residues 286 to 307 (PGYHHRRTNSEQDTTKPAKERD). The segment covering 293-307 (TNSEQDTTKPAKERD) has biased composition (basic and acidic residues).

It belongs to the class I-like SAM-binding methyltransferase superfamily. BMT5 family.

It is found in the nucleus. The protein resides in the nucleolus. The catalysed reaction is uridine(2634) in 25S rRNA + S-adenosyl-L-methionine = N(3)-methyluridine(2634) in 25S rRNA + S-adenosyl-L-homocysteine + H(+). Functionally, S-adenosyl-L-methionine-dependent methyltransferase that specifically methylates the N(3) position of uridine 2634 (m3U2634) in 25S rRNA. The chain is 25S rRNA (uridine(2634)-N(3))-methyltransferase (BMT5) from Saccharomyces cerevisiae (strain ATCC 204508 / S288c) (Baker's yeast).